The sequence spans 317 residues: Ornithine carbamoyltransferase (317 aa).

Carbamoyl phosphate contacts are provided by residues 57–60, Gln84, Arg108, and 135–138; these read STRT and HPCQ. L-ornithine contacts are provided by residues Asn166, Asp230, and 234–235; that span reads SM. Carbamoyl phosphate is bound by residues 270–271 and Arg298; that span reads CL.

This sequence belongs to the aspartate/ornithine carbamoyltransferase superfamily. OTCase family. As to quaternary structure, homododecamer.

It is found in the cytoplasm. The enzyme catalyses carbamoyl phosphate + L-ornithine = L-citrulline + phosphate + H(+). It functions in the pathway amino-acid biosynthesis; L-arginine biosynthesis; L-arginine from L-ornithine and carbamoyl phosphate: step 1/3. Its function is as follows. Reversibly catalyzes the transfer of the carbamoyl group from carbamoyl phosphate (CP) to the N(epsilon) atom of ornithine (ORN) to produce L-citrulline. The chain is Ornithine carbamoyltransferase from Pyrococcus horikoshii (strain ATCC 700860 / DSM 12428 / JCM 9974 / NBRC 100139 / OT-3).